The chain runs to 871 residues: Tegument protein UL47 homolog (871 aa).

The interval methionine 1–aspartate 212 is disordered. Positions isoleucine 13 to threonine 33 match the Nuclear localization signal motif. Polar residues-rich tracts occupy residues threonine 30–arginine 41 and glutamate 59–phenylalanine 81. Acidic residues-rich tracts occupy residues serine 114–glutamine 134, serine 146–aspartate 155, and serine 185–methionine 207.

The protein belongs to the alphaherpesvirinae HHV-1 UL47 family. In terms of assembly, interacts with US3 kinase. Interacts with UL31 and UL34; these interactions seem important for efficient virion nuclear egress. Interacts with UL41/VHS. In terms of processing, phosphorylated by US3. This phosphorylation is required for proper nuclear localization.

It is found in the virion tegument. It localises to the host nucleus. The protein localises to the host cytoplasm. In terms of biological role, tegument protein that can bind to various RNA transcripts. Plays a role in the attenuation of selective viral and cellular mRNA degradation by modulating the activity of host shutoff RNase UL41/VHS. Also plays a role in the primary envelopment of virions in the perinuclear space, probably by interacting with two nuclear egress proteins UL31 and UL34. This is Tegument protein UL47 homolog from Equus caballus (Horse).